The primary structure comprises 2968 residues: Trinucleotide repeat-containing gene 18 protein (2968 aa).

Disordered regions lie at residues 1–24 (MDGRDFGPQRSVHGPPPPLLSGLA) and 139–261 (GSPL…LAER). The span at 139 to 150 (GSPLLSQLGQPS) shows a compositional bias: low complexity. 2 stretches are compositionally biased toward basic and acidic residues: residues 221 to 233 (GKKDPRARGEEAS) and 243 to 260 (QEARAEGRQDRGPPRLAE). Ser-263 carries the phosphoserine modification. The segment covering 304 to 322 (GAKEAARQDEGARLLRRTE) has biased composition (basic and acidic residues). Disordered stretches follow at residues 304 to 356 (GAKE…PAGV) and 381 to 488 (FDER…PAAQ). Residues 327–351 (GPRPCPSPLPPPPAPPKGPPAPPAA) show a composition bias toward pro residues. 3 stretches are compositionally biased toward basic and acidic residues: residues 395–405 (RDARAREREAG), 419–431 (PLDRPEGLREKNS), and 464–479 (ELLKPEADPRPCERAP). The residue at position 611 (Ser-611) is a Phosphoserine. Disordered stretches follow at residues 612 to 679 (PFGG…EVRH), 941 to 1002 (EHRA…SPVA), 1019 to 1055 (PAYAYPATPSSHPTSPPPASPPPTPGITRKEEAPENV), 1106 to 1190 (DADG…MATP), 1212 to 1236 (SCAEPSECPDFVEGPEPRVDSPGRT), 1279 to 1306 (LAQVAPSESQPTLEMSDCDVPAGEGQCP), 1497 to 1566 (KQRE…SDDY), and 1687 to 1855 (SLKS…RERA). Residue Lys-620 forms a Glycyl lysine isopeptide (Lys-Gly) (interchain with G-Cter in SUMO2) linkage. 2 stretches are compositionally biased toward basic and acidic residues: residues 651-660 (LKRDPERPES) and 941-955 (EHRAEMEEKGSKRGL). Positions 916-949 (LQQQAAQALELQRSAQLVQERLKAQEHRAEMEEK) form a coiled coil. 2 stretches are compositionally biased toward low complexity: residues 966-983 (AGPGLLPRKPPGLAAGPA) and 1019-1031 (PAYAYPATPSSHP). Pro residues predominate over residues 1032 to 1043 (TSPPPASPPPTP). Residues 1046–1055 (TRKEEAPENV) show a composition bias toward basic and acidic residues. Ser-1127 and Ser-1136 each carry phosphoserine. Basic and acidic residues predominate over residues 1142 to 1162 (EPLREGPEEEPLAEREVKAEV). Over residues 1171–1181 (ELPPLESPLPL) the composition is skewed to pro residues. Residues 1481 to 1516 (LDFRMRLAEVQRQYKEKQRELVKLQRRRDSEDRREE) adopt a coiled-coil conformation. Residues 1497–1519 (KQRELVKLQRRRDSEDRREEPHR) are compositionally biased toward basic and acidic residues. Residues 1520 to 1534 (SLARRGPGRPRKRTH) are compositionally biased toward basic residues. Position 1540 is a phosphoserine (Ser-1540). The span at 1549-1563 (GHSSGKLSSKSLLTS) shows a compositional bias: low complexity. The span at 1816 to 1842 (SSEESFDQDESSEEEDEEEELEEEDEA) shows a compositional bias: acidic residues. A phosphoserine mark is found at Ser-1857 and Ser-1863. Disordered stretches follow at residues 1912-2148 (YTDS…LTPA) and 2295-2771 (LLVP…RLPS). 2 stretches are compositionally biased toward basic and acidic residues: residues 1957–1968 (SPDKAKLAVEKG) and 1993–2004 (LWTRRRSERIFL). Residues 2007-2024 (ASAAAPAPVSTAPATKTS) show a composition bias toward low complexity. A compositionally biased stretch (basic and acidic residues) spans 2034–2046 (PRKDAGRAKDRKD). Low complexity predominate over residues 2069–2085 (ALPSEARAPHASSLTAA). Basic and acidic residues predominate over residues 2093-2103 (KGKEVKKENRG). Residue Thr-2146 is modified to Phosphothreonine. The segment covering 2307–2316 (TSKDTGEGKD) has biased composition (basic and acidic residues). A compositionally biased stretch (basic residues) spans 2329 to 2338 (ARGRGRKPSA). Residues 2365–2374 (EPSSTPGSKK) are compositionally biased toward low complexity. The segment covering 2375-2384 (SPPEPVDKRA) has biased composition (basic and acidic residues). The segment covering 2390–2401 (RPAPPQPSPAPP) has biased composition (pro residues). Positions 2411-2433 (PFAELPAPATSLAPAPLITMPAT) are enriched in low complexity. 2 stretches are compositionally biased toward basic and acidic residues: residues 2441–2468 (RAAEESGAKGPRRPGEEAELLVKLDHEG) and 2477–2487 (AKEALLLREDP). Low complexity-rich tracts occupy residues 2559-2580 (SSSSSSSGSSSSSSSSSSSGSE) and 2603-2671 (SAAS…SSSS). Positions 2673-2685 (TDEDSSCSSDDEA) are enriched in acidic residues. A compositionally biased stretch (pro residues) spans 2723 to 2736 (APQPQAPPPQPTQP). Ser-2771 bears the Phosphoserine mark. The 146-residue stretch at 2817 to 2962 (EMIRIGDCAV…PTTGMIFSTD (146 aa)) folds into the BAH domain.

This is Trinucleotide repeat-containing gene 18 protein from Homo sapiens (Human).